The chain runs to 178 residues: Sec-independent protein translocase protein TatB (178 aa).

Residues 1-21 (MFDIGWSELLVIGVVALIAIG) traverse the membrane as a helical segment. The tract at residues 146-178 (LAIVREIKPEPQPQPADGAAPAEPERLKDAKAS) is disordered. Positions 168-178 (EPERLKDAKAS) are enriched in basic and acidic residues.

It belongs to the TatB family. The Tat system comprises two distinct complexes: a TatABC complex, containing multiple copies of TatA, TatB and TatC subunits, and a separate TatA complex, containing only TatA subunits. Substrates initially bind to the TatABC complex, which probably triggers association of the separate TatA complex to form the active translocon.

The protein resides in the cell inner membrane. Part of the twin-arginine translocation (Tat) system that transports large folded proteins containing a characteristic twin-arginine motif in their signal peptide across membranes. Together with TatC, TatB is part of a receptor directly interacting with Tat signal peptides. TatB may form an oligomeric binding site that transiently accommodates folded Tat precursor proteins before their translocation. This Bradyrhizobium sp. (strain ORS 278) protein is Sec-independent protein translocase protein TatB.